The primary structure comprises 421 residues: MTINYHKEIKTSHTWKFFVLLFRWKGSIWKAIYMETIIFLICYGIISVVYRTAMSEPSQRTFESVIRYCDKRLSFIPLEFVLGFFVTIVVDRWTKLWRTVGFIDDVCLLANLYVRGTSEKAIIYRRNIARYCALTQLLVFRDVSMRTRRRFPTMETVVAAGFMSKDELDLYNSYTTKNNSRLGKKYWIPANWALCMTYKARKDGYIESDYFKAQMEGEIRTWRTNIEWVCNYDWVPLPLMYPQLVCLAVNLYFLVSIIARQLVIEKHKMVDEVDVYFPVMTFLQFIFYMGWLKVIEVMLNPFGEDDDDFETNALIDRNITMGLKMVDNTMKTPELLKDQFFDEVLVSLLYSEESSQISNYHYHGSTSEVHLEQKCSSVRMIPHSQSEYTLKHMRKQTLSRSVLPDVNENERWKIPTSLEKF.

4 helical membrane passes run 28–48, 73–93, 239–259, and 275–295; these read IWKA…IISV, LSFI…VDRW, LMYP…SIIA, and VYFP…LKVI.

It belongs to the anion channel-forming bestrophin (TC 1.A.46) family. Calcium-sensitive chloride channel subfamily. Forms oligomers.

It localises to the cell membrane. Forms chloride channels. This is Bestrophin homolog 2 (best-2) from Caenorhabditis elegans.